A 236-amino-acid chain; its full sequence is Small ribosomal subunit protein uS2c (236 aa).

Belongs to the universal ribosomal protein uS2 family.

It is found in the plastid. It localises to the chloroplast. The polypeptide is Small ribosomal subunit protein uS2c (rps2) (Buxus microphylla (Littleleaf boxwood)).